A 349-amino-acid polypeptide reads, in one-letter code: N-acetyl-gamma-glutamyl-phosphate reductase (349 aa).

Residue C149 is part of the active site.

This sequence belongs to the NAGSA dehydrogenase family. Type 1 subfamily.

It localises to the cytoplasm. It catalyses the reaction N-acetyl-L-glutamate 5-semialdehyde + phosphate + NADP(+) = N-acetyl-L-glutamyl 5-phosphate + NADPH + H(+). The protein operates within amino-acid biosynthesis; L-arginine biosynthesis; N(2)-acetyl-L-ornithine from L-glutamate: step 3/4. Catalyzes the NADPH-dependent reduction of N-acetyl-5-glutamyl phosphate to yield N-acetyl-L-glutamate 5-semialdehyde. In Acinetobacter baumannii (strain ACICU), this protein is N-acetyl-gamma-glutamyl-phosphate reductase.